The sequence spans 413 residues: Ribulose bisphosphate carboxylase large chain (413 aa).

Positions 100 and 150 each coordinate substrate. The Proton acceptor role is filled by K152. Substrate is bound at residue K154. Mg(2+) contacts are provided by K178, D180, and E181. K178 carries the post-translational modification N6-carboxylysine. The active-site Proton acceptor is the H271. Substrate contacts are provided by R272, H304, and S356.

It belongs to the RuBisCO large chain family. Type I subfamily. In terms of assembly, heterohexadecamer of 8 large chains and 8 small chains; disulfide-linked. The disulfide link is formed within the large subunit homodimers. It depends on Mg(2+) as a cofactor. In terms of processing, the disulfide bond which can form in the large chain dimeric partners within the hexadecamer appears to be associated with oxidative stress and protein turnover.

Its subcellular location is the plastid. It is found in the chloroplast. The enzyme catalyses 2 (2R)-3-phosphoglycerate + 2 H(+) = D-ribulose 1,5-bisphosphate + CO2 + H2O. The catalysed reaction is D-ribulose 1,5-bisphosphate + O2 = 2-phosphoglycolate + (2R)-3-phosphoglycerate + 2 H(+). Its function is as follows. RuBisCO catalyzes two reactions: the carboxylation of D-ribulose 1,5-bisphosphate, the primary event in carbon dioxide fixation, as well as the oxidative fragmentation of the pentose substrate in the photorespiration process. Both reactions occur simultaneously and in competition at the same active site. The protein is Ribulose bisphosphate carboxylase large chain (rbcL) of Adiantum pedatum (Northern maidenhair fern).